The sequence spans 467 residues: Neutral protease 2 homolog NFIA_031120 (467 aa).

An N-terminal signal peptide occupies residues 1–19; sequence MKITALASAILAVVHGALA. A propeptide spanning residues 20 to 172 is cleaved from the precursor; that stretch reads LPARAPALDI…PASIKPLDRR (153 aa). 2 disulfides stabilise this stretch: cysteine 179–cysteine 251 and cysteine 258–cysteine 276. Residue histidine 300 coordinates Zn(2+). Glutamate 301 is a catalytic residue. Histidine 304 and aspartate 315 together coordinate Zn(2+). Over residues 359–451 the composition is skewed to polar residues; the sequence is WDGNSQPGQT…TMWDGSSEPG (93 aa). The tract at residues 359–467 is disordered; the sequence is WDGNSQPGQT…HTTWGNFYQA (109 aa).

This sequence belongs to the peptidase M35 family. Requires Zn(2+) as cofactor.

Its subcellular location is the secreted. It catalyses the reaction Preferential cleavage of bonds with hydrophobic residues in P1'. Also 3-Asn-|-Gln-4 and 8-Gly-|-Ser-9 bonds in insulin B chain.. Functionally, secreted metalloproteinase that allows assimilation of proteinaceous substrates. Shows high activities on basic nuclear substrates such as histone and protamine. In Neosartorya fischeri (strain ATCC 1020 / DSM 3700 / CBS 544.65 / FGSC A1164 / JCM 1740 / NRRL 181 / WB 181) (Aspergillus fischerianus), this protein is Neutral protease 2 homolog NFIA_031120.